The chain runs to 429 residues: Adenylosuccinate synthetase (429 aa).

GTP-binding positions include Gly13 to Lys19 and Gly41 to Thr43. Catalysis depends on Asp14, which acts as the Proton acceptor. Residues Asp14 and Gly41 each coordinate Mg(2+). Residues Asp14 to Lys17, Asn39 to His42, Thr130, Arg144, Gln225, Thr240, and Arg304 each bind IMP. Residue His42 is the Proton donor of the active site. Ala300–Arg306 is a substrate binding site. Residues Arg306, Lys332–Asp334, and Ser413–Gly415 contribute to the GTP site.

It belongs to the adenylosuccinate synthetase family. Homodimer. Requires Mg(2+) as cofactor.

The protein resides in the cytoplasm. It carries out the reaction IMP + L-aspartate + GTP = N(6)-(1,2-dicarboxyethyl)-AMP + GDP + phosphate + 2 H(+). The protein operates within purine metabolism; AMP biosynthesis via de novo pathway; AMP from IMP: step 1/2. Plays an important role in the de novo pathway of purine nucleotide biosynthesis. Catalyzes the first committed step in the biosynthesis of AMP from IMP. The protein is Adenylosuccinate synthetase of Pseudomonas fluorescens (strain SBW25).